The sequence spans 114 residues: Putative antiporter subunit mnhC2 (114 aa).

3 helical membrane passes run 3-23 (LILL…ILSI), 28-48 (IVIG…SMGT), and 72-92 (AIVL…LVLV).

It belongs to the CPA3 antiporters (TC 2.A.63) subunit C family. In terms of assembly, may form a heterooligomeric complex that consists of seven subunits: mnhA2, mnhB2, mnhC2, mnhD2, mnhE2, mnhF2 and mnhG2.

It is found in the cell membrane. This Staphylococcus aureus (strain MRSA252) protein is Putative antiporter subunit mnhC2 (mnhC2).